The chain runs to 430 residues: Glucose-6-phosphate isomerase (430 aa).

Glu-284 (proton donor) is an active-site residue. Residues His-305 and Lys-420 contribute to the active site.

It belongs to the GPI family.

It is found in the cytoplasm. The enzyme catalyses alpha-D-glucose 6-phosphate = beta-D-fructose 6-phosphate. The protein operates within carbohydrate biosynthesis; gluconeogenesis. Its pathway is carbohydrate degradation; glycolysis; D-glyceraldehyde 3-phosphate and glycerone phosphate from D-glucose: step 2/4. Functionally, catalyzes the reversible isomerization of glucose-6-phosphate to fructose-6-phosphate. The protein is Glucose-6-phosphate isomerase of Mycoplasma pneumoniae (strain ATCC 29342 / M129 / Subtype 1) (Mycoplasmoides pneumoniae).